We begin with the raw amino-acid sequence, 507 residues long: ATP synthase subunit alpha, chloroplastic (507 aa).

An ATP-binding site is contributed by 170-177 (GDRQTGKT).

It belongs to the ATPase alpha/beta chains family. F-type ATPases have 2 components, CF(1) - the catalytic core - and CF(0) - the membrane proton channel. CF(1) has five subunits: alpha(3), beta(3), gamma(1), delta(1), epsilon(1). CF(0) has four main subunits: a, b, b' and c.

It is found in the plastid. It localises to the chloroplast thylakoid membrane. The catalysed reaction is ATP + H2O + 4 H(+)(in) = ADP + phosphate + 5 H(+)(out). Its function is as follows. Produces ATP from ADP in the presence of a proton gradient across the membrane. The alpha chain is a regulatory subunit. In Silene latifolia (White campion), this protein is ATP synthase subunit alpha, chloroplastic.